A 672-amino-acid polypeptide reads, in one-letter code: MESRKLISATDIQYSGSLLNSLNEQRGHGLFCDVTVIVEDRKFRAHKNILSASSTYFHQLFSVAGQVVELSFIRAEIFAEILNYIYSSKIVRVRSDLLDELIKSGQLLGVKFIAELGVPLSQVKSISGTAQDGNTEPLPPDSGDKNLVIQKSKDEAQDNGATIMPIITESFSLSAEDYEMKKIIVTDSDDDDDDVIFCSEILPTKETLPSNNTVAQVQSNPGPVAISDVAPSASNNSPPLTNITPTQKLPTPVNQATLSQTQGSEKLLVSSAPTHLTPNIILLNQTPLSTPPNVSSSLPNHMPSSINLLVQNQQTPNSAILTGNKANEEEEEEIIDDDDDTISSSPDSAVSNTSLVPQADTSQNTSFDGSLIQKMQIPTLLQEPLSNSLKISDIITRNTNDPGVGSKHLMEGQKIITLDTATEIEGLSTGCKVYANIGEDTYDIVIPVKDDPDEGEARLENEIPKTSGSEMANKRMKVKHDDHYELIVDGRVYYICIVCKRSYVCLTSLRRHFNIHSWEKKYPCRYCEKVFPLAEYRTKHEIHHTGERRYQCLACGKSFINYQFMSSHIKSVHSQDPSGDSKLYRLHPCRSLQIRQYAYLSDRSSTIPAMKDDGIGYKVDTGKEPPVGTTTSTQNKPMTWEDIFIQQENDSIFKQNVTDGSTEFEFIIPESY.

An interaction with NCOR1 region spans residues 1 to 103 (MESRKLISAT…RSDLLDELIK (103 aa)). The self-association stretch occupies residues 1–136 (MESRKLISAT…SGTAQDGNTE (136 aa)). A BTB domain is found at 32-94 (CDVTVIVEDR…IYSSKIVRVR (63 aa)). Residues Lys151 and Lys153 each participate in a glycyl lysine isopeptide (Lys-Gly) (interchain with G-Cter in SUMO2) cross-link. Thr251 is modified (phosphothreonine). Residues 298–573 (LPNHMPSSIN…FMSSHIKSVH (276 aa)) form an interaction with CBFA2T3 region. A disordered region spans residues 325–354 (KANEEEEEEIIDDDDDTISSSPDSAVSNTS). Positions 328-341 (EEEEEEIIDDDDDT) are enriched in acidic residues. Glycyl lysine isopeptide (Lys-Gly) (interchain with G-Cter in SUMO2) cross-links involve residues Lys390, Lys407, Lys414, Lys449, Lys465, Lys474, and Lys479. The interaction with CTNND1 stretch occupies residues 454–672 (EGEARLENEI…EFEFIIPESY (219 aa)). A Nuclear localization signal motif is present at residues 471–480 (MANKRMKVKH). 3 C2H2-type zinc fingers span residues 494–516 (YICI…FNIH), 522–544 (YPCR…EIHH), and 550–573 (YQCL…KSVH). The interval 514–638 (NIHSWEKKYP…TTTSTQNKPM (125 aa)) is required for DNA-binding. Glycyl lysine isopeptide (Lys-Gly) (interchain with G-Cter in SUMO2) cross-links involve residues Lys539, Lys570, Lys582, Lys611, and Lys618. Residues 616 to 635 (GYKVDTGKEPPVGTTTSTQN) are disordered.

As to quaternary structure, self-associates. Interacts with CTNND2. Interacts with CTNND1, and this interaction inhibits binding to both methylated and non-methylated DNA. Interacts with NCOR1. Interacts with KPNA2/RCH1, which may mediate nuclear import of this protein. Interacts with CBFA2T3. In terms of tissue distribution, expressed in vascular endothelium.

It localises to the nucleus. Its subcellular location is the cytoplasm. Functionally, transcriptional regulator with bimodal DNA-binding specificity. Binds to methylated CpG dinucleotides in the consensus sequence 5'-CGCG-3' and also binds to the non-methylated consensus sequence 5'-CTGCNA-3' also known as the consensus kaiso binding site (KBS). Recruits the N-CoR repressor complex to promote histone deacetylation and the formation of repressive chromatin structures in target gene promoters. May contribute to the repression of target genes of the Wnt signaling pathway. May also activate transcription of a subset of target genes by the recruitment of CTNND2. Represses expression of MMP7 in conjunction with transcriptional corepressors CBFA2T3, CBFA2T2 and RUNX1T1. The protein is Transcriptional regulator Kaiso (ZBTB33) of Homo sapiens (Human).